Here is a 120-residue protein sequence, read N- to C-terminus: Chaperonin GroEL (120 aa).

23–27 (DGTTT) is a binding site for ATP.

It belongs to the chaperonin (HSP60) family. In terms of assembly, forms a cylinder of 14 subunits composed of two heptameric rings stacked back-to-back. Interacts with the co-chaperonin GroES.

It is found in the cytoplasm. The catalysed reaction is ATP + H2O + a folded polypeptide = ADP + phosphate + an unfolded polypeptide.. In terms of biological role, together with its co-chaperonin GroES, plays an essential role in assisting protein folding. The GroEL-GroES system forms a nano-cage that allows encapsulation of the non-native substrate proteins and provides a physical environment optimized to promote and accelerate protein folding. In Mycobacterium malmoense, this protein is Chaperonin GroEL.